A 344-amino-acid polypeptide reads, in one-letter code: Holliday junction branch migration complex subunit RuvB (344 aa).

The interval 4–194 is large ATPase domain (RuvB-L); that stretch reads CLLRFCYNSL…FGITGHMEYY (191 aa). Residues leucine 33, arginine 34, glycine 75, lysine 78, threonine 79, threonine 80, 141–143, arginine 184, tyrosine 194, and arginine 231 contribute to the ATP site; that span reads EDF. Threonine 79 contacts Mg(2+). Residues 195 to 265 form a small ATPAse domain (RuvB-S) region; sequence TDIDLTEIVE…ITDKALTMLD (71 aa). The head domain (RuvB-H) stretch occupies residues 268 to 344; it reads HEGLDYVDQK…YEHLGYRYTE (77 aa). DNA contacts are provided by arginine 304, arginine 323, arginine 325, and arginine 328.

This sequence belongs to the RuvB family. In terms of assembly, homohexamer. Forms an RuvA(8)-RuvB(12)-Holliday junction (HJ) complex. HJ DNA is sandwiched between 2 RuvA tetramers; dsDNA enters through RuvA and exits via RuvB. An RuvB hexamer assembles on each DNA strand where it exits the tetramer. Each RuvB hexamer is contacted by two RuvA subunits (via domain III) on 2 adjacent RuvB subunits; this complex drives branch migration. In the full resolvosome a probable DNA-RuvA(4)-RuvB(12)-RuvC(2) complex forms which resolves the HJ.

Its subcellular location is the cytoplasm. The catalysed reaction is ATP + H2O = ADP + phosphate + H(+). In terms of biological role, the RuvA-RuvB-RuvC complex processes Holliday junction (HJ) DNA during genetic recombination and DNA repair, while the RuvA-RuvB complex plays an important role in the rescue of blocked DNA replication forks via replication fork reversal (RFR). RuvA specifically binds to HJ cruciform DNA, conferring on it an open structure. The RuvB hexamer acts as an ATP-dependent pump, pulling dsDNA into and through the RuvAB complex. RuvB forms 2 homohexamers on either side of HJ DNA bound by 1 or 2 RuvA tetramers; 4 subunits per hexamer contact DNA at a time. Coordinated motions by a converter formed by DNA-disengaged RuvB subunits stimulates ATP hydrolysis and nucleotide exchange. Immobilization of the converter enables RuvB to convert the ATP-contained energy into a lever motion, pulling 2 nucleotides of DNA out of the RuvA tetramer per ATP hydrolyzed, thus driving DNA branch migration. The RuvB motors rotate together with the DNA substrate, which together with the progressing nucleotide cycle form the mechanistic basis for DNA recombination by continuous HJ branch migration. Branch migration allows RuvC to scan DNA until it finds its consensus sequence, where it cleaves and resolves cruciform DNA. In Streptococcus mutans serotype c (strain ATCC 700610 / UA159), this protein is Holliday junction branch migration complex subunit RuvB.